The sequence spans 168 residues: Transmembrane protein 229b (168 aa).

Topologically, residues 1–14 are cytoplasmic; it reads MAPPEPLTALSRWY. The chain crosses the membrane as a helical span at residues 15-35; that stretch reads LYAIHGYFCEVMFTAAWDFVV. Residues 36-40 are Extracellular-facing; that stretch reads NYNWK. The chain crosses the membrane as a helical span at residues 41 to 61; the sequence is FPGVTSVWALFIYGTSILIVE. The Cytoplasmic segment spans residues 62–72; it reads KMYLYLKDKCN. Residues 73 to 93 form a helical membrane-spanning segment; it reads ILIRCLIYTLWTYIWEFSTGL. Over 94-109 the chain is Extracellular; sequence ILRQFNACPWDYSQFD. The helical transmembrane segment at 110-130 threads the bilayer; that stretch reads FDFMGLITLEYAIPWFCASFI. Over 131–168 the chain is Cytoplasmic; it reads MEQLVIRNTLRLRFDEHAEPGSPVMSTVSMANGHVKCN.

Belongs to the TMEM229 family.

It localises to the membrane. The chain is Transmembrane protein 229b (tmem229b) from Xenopus tropicalis (Western clawed frog).